The following is a 175-amino-acid chain: Adenylate kinase isoenzyme 6 homolog (175 aa).

Gly-17, Gly-19, Lys-20, Thr-21, and Ser-22 together coordinate ATP. Residues 37 to 60 (DISSAVKEKELHDGWDSEFQCYIL) form an NMPbind region. An LID region spans residues 112 to 122 (KRNYNQHKITN). Arg-113 contacts ATP.

It belongs to the adenylate kinase family. AK6 subfamily. Monomer and homodimer. Interacts with small ribosomal subunit protein uS11. Not a structural component of 43S pre-ribosomes, but transiently interacts with them by binding to uS11.

The protein resides in the cytoplasm. It localises to the nucleus. The catalysed reaction is AMP + ATP = 2 ADP. It carries out the reaction ATP + H2O = ADP + phosphate + H(+). Broad-specificity nucleoside monophosphate (NMP) kinase that catalyzes the reversible transfer of the terminal phosphate group between nucleoside triphosphates and monophosphates. Also has ATPase activity. Involved in the late cytoplasmic maturation steps of the 40S ribosomal particles, specifically 18S rRNA maturation. While NMP activity is not required for ribosome maturation, ATPase activity is. Associates transiently with small ribosomal subunit protein uS11. ATP hydrolysis breaks the interaction with uS11. May temporarily remove uS11 from the ribosome to enable a conformational change of the ribosomal RNA that is needed for the final maturation step of the small ribosomal subunit. Its NMP activity may have a role in nuclear energy homeostasis. This chain is Adenylate kinase isoenzyme 6 homolog, found in Dictyostelium discoideum (Social amoeba).